The chain runs to 373 residues: Transcription factor SPATULA (373 aa).

Residues 1-21 (MISQREEREEKKQRVMGDKKL) are compositionally biased toward basic and acidic residues. Disordered regions lie at residues 1–46 (MISQ…PSSS) and 141–210 (VQGN…KRRR). Low complexity predominate over residues 141-160 (VQGNSSGTRVSSSSVGASGN). Over residues 161–177 (ETDEYDCESEEGGEAVV) the composition is skewed to acidic residues. Over residues 182–191 (SSKSGPSSRS) the composition is skewed to low complexity. Positions 197–210 (RAAEVHNLSEKRRR) are enriched in basic and acidic residues. In terms of domain architecture, bHLH spans 197-246 (RAAEVHNLSEKRRRSRINEKMKALQSLIPNSNKTDKASMLDEAIEYLKQL).

Homodimer. Interacts with HEC1, HEC2 and HEC3. Binds to RGL2 and RGA. As to expression, expressed in lateral root caps, young leaves, stipules, maturing pith cells of the stem, differentiating vascular cells, shoot apical meristems and flowers.

It localises to the nucleus. In terms of biological role, transcription factor that plays a role in floral organogenesis. Promotes the growth of carpel margins and of pollen tract tissues derived from them. The protein is Transcription factor SPATULA (SPT) of Arabidopsis thaliana (Mouse-ear cress).